A 191-amino-acid polypeptide reads, in one-letter code: NADH-quinone oxidoreductase subunit B (191 aa).

C52, C53, C118, and C148 together coordinate [4Fe-4S] cluster.

It belongs to the complex I 20 kDa subunit family. NDH-1 is composed of 14 different subunits. Subunits NuoB, C, D, E, F, and G constitute the peripheral sector of the complex. Requires [4Fe-4S] cluster as cofactor.

The protein localises to the cell inner membrane. The catalysed reaction is a quinone + NADH + 5 H(+)(in) = a quinol + NAD(+) + 4 H(+)(out). In terms of biological role, NDH-1 shuttles electrons from NADH, via FMN and iron-sulfur (Fe-S) centers, to quinones in the respiratory chain. The immediate electron acceptor for the enzyme in this species is believed to be a menaquinone. Couples the redox reaction to proton translocation (for every two electrons transferred, four hydrogen ions are translocated across the cytoplasmic membrane), and thus conserves the redox energy in a proton gradient. This Azobacteroides pseudotrichonymphae genomovar. CFP2 protein is NADH-quinone oxidoreductase subunit B.